Consider the following 338-residue polypeptide: Nucleoid-associated protein VSAL_I1059 (338 aa).

A disordered region spans residues 319-338 (KGTPPNLKDQLTRRLGSSES).

It belongs to the YejK family.

It localises to the cytoplasm. It is found in the nucleoid. This Aliivibrio salmonicida (strain LFI1238) (Vibrio salmonicida (strain LFI1238)) protein is Nucleoid-associated protein VSAL_I1059.